The sequence spans 129 residues: Small ribosomal subunit protein uS11 (129 aa).

It belongs to the universal ribosomal protein uS11 family. As to quaternary structure, part of the 30S ribosomal subunit. Interacts with proteins S7 and S18. Binds to IF-3.

In terms of biological role, located on the platform of the 30S subunit, it bridges several disparate RNA helices of the 16S rRNA. Forms part of the Shine-Dalgarno cleft in the 70S ribosome. In Sphingopyxis alaskensis (strain DSM 13593 / LMG 18877 / RB2256) (Sphingomonas alaskensis), this protein is Small ribosomal subunit protein uS11.